Here is a 334-residue protein sequence, read N- to C-terminus: Ornithine carbamoyltransferase, catabolic (334 aa).

Residues 57 to 60 (STRT), Gln84, Arg108, and 135 to 138 (HPTQ) each bind carbamoyl phosphate. Residues Asn168, Asp232, and 236 to 237 (SM) contribute to the L-ornithine site. Carbamoyl phosphate contacts are provided by residues 274–275 (CL) and Arg321.

It belongs to the aspartate/ornithine carbamoyltransferase superfamily. OTCase family.

Its subcellular location is the cytoplasm. It catalyses the reaction carbamoyl phosphate + L-ornithine = L-citrulline + phosphate + H(+). It participates in amino-acid degradation; L-arginine degradation via ADI pathway; carbamoyl phosphate from L-arginine: step 2/2. In terms of biological role, reversibly catalyzes the transfer of the carbamoyl group from carbamoyl phosphate (CP) to the N(epsilon) atom of ornithine (ORN) to produce L-citrulline. The protein is Ornithine carbamoyltransferase, catabolic (arcB) of Avibacterium paragallinarum (Haemophilus gallinarum).